The primary structure comprises 373 residues: MAETREEETVSAEASGFSDLSDSEFLEFLDLEDAQESKALVNMPGPSSESLGKDDKPISLQNWKRGLDILSPMERFHLKYLYVTDLATQNWCELQTAYGKELPGFLAPEKAAVLDTGASIHLARELELHDLVTVPVTTKEDAWAIKFLNILLLIPTLQSEGHIREFPVFGEGEGVLLVGVIDELHYTAKGELELAELKTRRRPMLPLEAQKKKDCFQVSLYKYIFDAMVQGKVTPASLIHHTKLCLEKPLGPSVLRHAQQGGFSVKSLGDLMELVFLSLTLSDLPVIDILKIEYIHQETATVLGTEIVAFKEKEVRAKVQHYMAYWMGHREPQGVDVEEAWKCRTCTYADICEWRKGSGVLSSTLAPQVKKAK.

Cysteine 92 provides a ligand contact to [4Fe-4S] cluster. Mg(2+)-binding residues include aspartate 182 and glutamate 196. [4Fe-4S] cluster contacts are provided by cysteine 343, cysteine 346, and cysteine 352.

The protein belongs to the EXO5 family. Monomer; monomeric form has weak exonuclease activity. Homodimer; homodimeric form is unsure but has much higher exonuclease activity, suggesting that it could homodimerize upon DNA-binding. Interacts with the replication protein A (RPA) complex. [4Fe-4S] cluster is required as a cofactor. It depends on Mg(2+) as a cofactor.

It localises to the nucleus. It is found in the cytoplasm. The protein resides in the cytosol. Its function is as follows. Single-stranded DNA (ssDNA) bidirectional exonuclease involved in DNA repair. Probably involved in DNA repair following ultraviolet (UV) irradiation and interstrand cross-links (ICLs) damage. Has both 5'-3' and 3'-5' exonuclease activities with a strong preference for 5'-ends. Acts as a sliding exonuclease that loads at ssDNA ends and then slides along the ssDNA prior to cutting; however the sliding and the 3'-5' exonuclease activities are abolished upon binding to the replication protein A (RPA) complex that enforces 5'-directionality activity. The chain is Exonuclease V (EXO5) from Homo sapiens (Human).